The sequence spans 357 residues: UPF0283 membrane protein HS_0596 (357 aa).

The next 3 helical transmembrane spans lie at 67-87, 96-116, and 213-233; these read LMAT…QWLV, IAFV…GAII, and AVES…MFFI.

This sequence belongs to the UPF0283 family.

It is found in the cell inner membrane. The protein is UPF0283 membrane protein HS_0596 of Histophilus somni (strain 129Pt) (Haemophilus somnus).